Reading from the N-terminus, the 106-residue chain is MAQKKPKRNLSALKRHRQSLKRRLRNKAKKSAIKTLSKKAVQLAQEGKAEEALKIMRKAESLIDKAAKGSTLHKNAAARRKSRLMRKVRQLLEAAGAPLIGGGLSA.

Residues 1–32 (MAQKKPKRNLSALKRHRQSLKRRLRNKAKKSA) are compositionally biased toward basic residues. The segment at 1 to 33 (MAQKKPKRNLSALKRHRQSLKRRLRNKAKKSAI) is disordered.

This sequence belongs to the bacterial ribosomal protein bS20 family.

Binds directly to 16S ribosomal RNA. The protein is Small ribosomal subunit protein bS20 (rpsT) of Thermus thermophilus (strain ATCC BAA-163 / DSM 7039 / HB27).